The sequence spans 360 residues: Peptide chain release factor 1 (360 aa).

N5-methylglutamine is present on glutamine 235.

This sequence belongs to the prokaryotic/mitochondrial release factor family. Post-translationally, methylated by PrmC. Methylation increases the termination efficiency of RF1.

It localises to the cytoplasm. Functionally, peptide chain release factor 1 directs the termination of translation in response to the peptide chain termination codons UAG and UAA. The polypeptide is Peptide chain release factor 1 (Burkholderia vietnamiensis (strain G4 / LMG 22486) (Burkholderia cepacia (strain R1808))).